The primary structure comprises 208 residues: N-(5'-phosphoribosyl)anthranilate isomerase (208 aa).

It belongs to the TrpF family.

It catalyses the reaction N-(5-phospho-beta-D-ribosyl)anthranilate = 1-(2-carboxyphenylamino)-1-deoxy-D-ribulose 5-phosphate. The protein operates within amino-acid biosynthesis; L-tryptophan biosynthesis; L-tryptophan from chorismate: step 3/5. The sequence is that of N-(5'-phosphoribosyl)anthranilate isomerase from Desulforamulus reducens (strain ATCC BAA-1160 / DSM 100696 / MI-1) (Desulfotomaculum reducens).